Consider the following 717-residue polypeptide: Cell division cycle protein 27 homolog A (717 aa).

Residues 198–208 (TEHIPGENQQD) are compositionally biased toward polar residues. Disordered stretches follow at residues 198–217 (TEHIPGENQQDLKIMQQPGD), 282–315 (LSAEAQEESGRRRSARIAARKKNPMSQSFGKDSH), and 342–374 (SKEATTSGQSVSDIGSSVDDEEKSNPSESSPDR). Over residues 293–304 (RRSARIAARKKN) the composition is skewed to basic residues. Residues 342 to 356 (SKEATTSGQSVSDIG) are compositionally biased toward polar residues. TPR repeat units lie at residues 421-454 (HWVLMQVGKAYFELQDYFNADSSFTLAHQKYPYA), 489-522 (PESWCAVGNCYSLRKDHDTALKMFQRAIQLNERF), 524-556 (YAHTLCGHEFAALEEFEDAERCYRKALGIDTRH), 557-590 (YNAWYGLGMTYLRQEKFEFAQHQFQLALQINPRS), 592-624 (VIMCYYGIALHESKRNDEALMMMEKAVLTDAKN), 625-658 (PLPKYYKAHILTSLGDYHKAQKVLEELKECAPQE), and 659-692 (SSVHASLGKIYNQLKQYDKAVLHFGIALDLSPSP).

This sequence belongs to the APC3/CDC27 family. In terms of assembly, the APC/C is composed of at least 10 subunits. Interacts with APC2 and APC10.

The protein localises to the nucleus. Its pathway is protein modification; protein ubiquitination. Component of the anaphase promoting complex/cyclosome (APC/C), a cell cycle-regulated E3 ubiquitin-protein ligase complex that controls progression through mitosis and the G1 phase of the cell cycle. The APC/C complex controls several key steps in the cell cycle by mediating ubiquitination and subsequent degradation of target proteins such as cyclins. The APC/C complex is required for the female gametophyte development and is involved in several aspect of development by controlling cell division and cell elongation. Involved in the control of endoreduplication. Functionally redundant with CDC27B in the control of gametophyte development. This Arabidopsis thaliana (Mouse-ear cress) protein is Cell division cycle protein 27 homolog A (CDC27A).